The sequence spans 175 residues: Adenine phosphoribosyltransferase (175 aa).

Belongs to the purine/pyrimidine phosphoribosyltransferase family. Homodimer.

The protein resides in the cytoplasm. It carries out the reaction AMP + diphosphate = 5-phospho-alpha-D-ribose 1-diphosphate + adenine. It functions in the pathway purine metabolism; AMP biosynthesis via salvage pathway; AMP from adenine: step 1/1. Its function is as follows. Catalyzes a salvage reaction resulting in the formation of AMP, that is energically less costly than de novo synthesis. The polypeptide is Adenine phosphoribosyltransferase (Oenococcus oeni (strain ATCC BAA-331 / PSU-1)).